Consider the following 331-residue polypeptide: Tryptophan--tRNA ligase (331 aa).

ATP is bound by residues 10-12 (QPS) and 18-19 (GN). The short motif at 11–19 (PSGQLTLGN) is the 'HIGH' region element. Position 133 (Asp-133) interacts with L-tryptophan. Residues 145–147 (GED), Val-184, and 193–197 (KMSKS) each bind ATP. Positions 193-197 (KMSKS) match the 'KMSKS' region motif.

Belongs to the class-I aminoacyl-tRNA synthetase family. Homodimer.

The protein resides in the cytoplasm. The catalysed reaction is tRNA(Trp) + L-tryptophan + ATP = L-tryptophyl-tRNA(Trp) + AMP + diphosphate + H(+). Catalyzes the attachment of tryptophan to tRNA(Trp). This chain is Tryptophan--tRNA ligase, found in Listeria monocytogenes serovar 1/2a (strain ATCC BAA-679 / EGD-e).